The following is an 830-amino-acid chain: Probable glucan 1,3-beta-glucosidase D (830 aa).

A compositionally biased stretch (basic and acidic residues) spans 1–34 (MPSQSRSRDRYRGRDTEYTRRRYPDEHDYSHDDH). The disordered stretch occupies residues 1–279 (MPSQSRSRDR…PPMDARWPKG (279 aa)). The Cytoplasmic portion of the chain corresponds to 1–301 (MPSQSRSRDR…GRPFWKQKKW (301 aa)). The segment covering 35–51 (DYDYDDDDDDNDDLEQD) has biased composition (acidic residues). Composition is skewed to basic and acidic residues over residues 52-98 (VTER…ERRR) and 110-175 (QHRE…KHQS). Low complexity predominate over residues 181–194 (SASHLLSADALARL). Composition is skewed to basic and acidic residues over residues 198 to 215 (YEKE…AAKA), 228 to 243 (EQER…DRSR), and 253 to 264 (EEGRGPEMEFRR). Residues 302–322 (LIGIGVVILILVIVIPVAVVV) form a helical; Signal-anchor for type II membrane protein membrane-spanning segment. At 323-830 (SKKHNDKPNA…PDFGSLPEYY (508 aa)) the chain is on the extracellular side. The tract at residues 327-351 (NDKPNATTTQPDGTTPSNSNLDGLS) is disordered. Polar residues predominate over residues 330–348 (PNATTTQPDGTTPSNSNLD). 6 N-linked (GlcNAc...) asparagine glycosylation sites follow: N331, N376, N381, N393, N546, and N558. Catalysis depends on E597, which acts as the Proton donor. N-linked (GlcNAc...) asparagine glycans are attached at residues N610, N636, N669, and N689. The active-site Nucleophile is the E701.

It belongs to the glycosyl hydrolase 5 (cellulase A) family.

The protein resides in the cell membrane. It catalyses the reaction Successive hydrolysis of beta-D-glucose units from the non-reducing ends of (1-&gt;3)-beta-D-glucans, releasing alpha-glucose.. In terms of biological role, glucosidase involved in the degradation of cellulosic biomass. Active on lichenan. This is Probable glucan 1,3-beta-glucosidase D (exgD) from Aspergillus clavatus (strain ATCC 1007 / CBS 513.65 / DSM 816 / NCTC 3887 / NRRL 1 / QM 1276 / 107).